The chain runs to 169 residues: Crossover junction endodeoxyribonuclease RuvC (169 aa).

Residues aspartate 7, glutamate 67, and aspartate 140 contribute to the active site. Positions 7, 67, and 140 each coordinate Mg(2+).

This sequence belongs to the RuvC family. As to quaternary structure, homodimer which binds Holliday junction (HJ) DNA. The HJ becomes 2-fold symmetrical on binding to RuvC with unstacked arms; it has a different conformation from HJ DNA in complex with RuvA. In the full resolvosome a probable DNA-RuvA(4)-RuvB(12)-RuvC(2) complex forms which resolves the HJ. Requires Mg(2+) as cofactor.

The protein localises to the cytoplasm. It carries out the reaction Endonucleolytic cleavage at a junction such as a reciprocal single-stranded crossover between two homologous DNA duplexes (Holliday junction).. In terms of biological role, the RuvA-RuvB-RuvC complex processes Holliday junction (HJ) DNA during genetic recombination and DNA repair. Endonuclease that resolves HJ intermediates. Cleaves cruciform DNA by making single-stranded nicks across the HJ at symmetrical positions within the homologous arms, yielding a 5'-phosphate and a 3'-hydroxyl group; requires a central core of homology in the junction. The consensus cleavage sequence is 5'-(A/T)TT(C/G)-3'. Cleavage occurs on the 3'-side of the TT dinucleotide at the point of strand exchange. HJ branch migration catalyzed by RuvA-RuvB allows RuvC to scan DNA until it finds its consensus sequence, where it cleaves and resolves the cruciform DNA. The polypeptide is Crossover junction endodeoxyribonuclease RuvC (Clostridioides difficile (strain 630) (Peptoclostridium difficile)).